The following is a 537-amino-acid chain: O-phosphoserine--tRNA(Cys) ligase (537 aa).

Substrate is bound by residues His-186–Thr-188, Ser-231–Ser-233, Tyr-273–Tyr-274, and Asn-317.

Belongs to the class-II aminoacyl-tRNA synthetase family. O-phosphoseryl-tRNA(Cys) synthetase subfamily. In terms of assembly, homotetramer. Interacts with SepCysS.

It carries out the reaction tRNA(Cys) + O-phospho-L-serine + ATP = O-phospho-L-seryl-tRNA(Cys) + AMP + diphosphate. Functionally, catalyzes the attachment of O-phosphoserine (Sep) to tRNA(Cys). The protein is O-phosphoserine--tRNA(Cys) ligase of Methanococcus maripaludis (strain DSM 14266 / JCM 13030 / NBRC 101832 / S2 / LL).